A 507-amino-acid chain; its full sequence is Archaeal-type glutamate synthase [NADPH] (507 aa).

2 4Fe-4S ferredoxin-type domains span residues 10 to 39 (FVVERDDYKCIRCLACVRVCSYGANYYDEN) and 41 to 70 (NRVYTENYKCVGCHFCEAICPTEAITVRRN). [4Fe-4S] cluster is bound by residues Cys-19, Cys-22, Cys-25, Cys-29, Cys-50, Cys-53, Cys-56, and Cys-60.

It belongs to the glutamate synthase family. FMN serves as cofactor.

The enzyme catalyses 2 L-glutamate + NADP(+) = L-glutamine + 2-oxoglutarate + NADPH + H(+). The sequence is that of Archaeal-type glutamate synthase [NADPH] from Thermotoga neapolitana (strain ATCC 49049 / DSM 4359 / NBRC 107923 / NS-E).